Here is a 215-residue protein sequence, read N- to C-terminus: Adenylate kinase (215 aa).

10–15 (GAGKGT) provides a ligand contact to ATP. The tract at residues 30 to 59 (STGDMLRAAVKAGTPIGLKAKAVMEAGELV) is NMP. AMP-binding positions include Thr31, Arg36, 57–59 (ELV), 85–88 (GYPR), and Gln92. The tract at residues 126 to 163 (GRYTCANCGEGYHDRFKQPKVAGVCDVCGSAEFKRRPD) is LID. Arg127 provides a ligand contact to ATP. Residues Cys130, Cys133, Cys150, and Cys153 each coordinate Zn(2+). AMP-binding residues include Arg160 and Arg172. Ala200 contributes to the ATP binding site.

This sequence belongs to the adenylate kinase family. As to quaternary structure, monomer.

Its subcellular location is the cytoplasm. It catalyses the reaction AMP + ATP = 2 ADP. Its pathway is purine metabolism; AMP biosynthesis via salvage pathway; AMP from ADP: step 1/1. Functionally, catalyzes the reversible transfer of the terminal phosphate group between ATP and AMP. Plays an important role in cellular energy homeostasis and in adenine nucleotide metabolism. This Rhizorhabdus wittichii (strain DSM 6014 / CCUG 31198 / JCM 15750 / NBRC 105917 / EY 4224 / RW1) (Sphingomonas wittichii) protein is Adenylate kinase.